The following is a 332-amino-acid chain: Ornithine carbamoyltransferase, catabolic (332 aa).

Residues 60–63 (STRT), Gln-87, Arg-111, and 138–141 (HPTQ) each bind carbamoyl phosphate. L-ornithine is bound by residues Asn-170, Asp-230, and 234–235 (SM). Residues 271-272 (CL) and Arg-316 each bind carbamoyl phosphate.

It belongs to the aspartate/ornithine carbamoyltransferase superfamily. OTCase family.

It is found in the cytoplasm. The catalysed reaction is carbamoyl phosphate + L-ornithine = L-citrulline + phosphate + H(+). It participates in amino-acid degradation; L-arginine degradation via ADI pathway; carbamoyl phosphate from L-arginine: step 2/2. Functionally, reversibly catalyzes the transfer of the carbamoyl group from carbamoyl phosphate (CP) to the N(epsilon) atom of ornithine (ORN) to produce L-citrulline. The sequence is that of Ornithine carbamoyltransferase, catabolic from Bacillus cereus (strain ATCC 10987 / NRS 248).